Reading from the N-terminus, the 117-residue chain is Big defensin (117 aa).

Positions 1-23 (MKGNIGIAVFYMLLLLLPTDSIG) are cleaved as a signal peptide. The propeptide occupies 26 to 36 (MEEEQEKLFRQ). Cystine bridges form between Cys-83/Cys-113, Cys-90/Cys-108, and Cys-94/Cys-114.

Belongs to the big defensin family. As to quaternary structure, interacts with intracellular coagulation inhibitor 1/LICI-1. In terms of tissue distribution, expressed in all tissues examined, including hemocytes, heart, hepatopancreas, stomach, intestine and skeletal muscle.

It localises to the secreted. Functionally, significantly inhibits the growth of Gram-negative and Gram-positive bacteria and fungi in vitro. This is Big defensin from Tachypleus tridentatus (Japanese horseshoe crab).